A 207-amino-acid polypeptide reads, in one-letter code: MTTAAFTPWILGLTGGIGSGKSAAAERFVELGVHLVDADQAARWVVEPGRPALASIVERFGPGVLQGDGQLDRAALRQLIFADPAQRKWLEQLLHPLIGQEIFSYLAKAQSPYAVYVSPLLIESGQHHKTQRVLVIDAPQDLQIARTLARDNTSAEHVQAILQAQLAREDRLRHADDVVVNDGGLAALHEQIDRLHHFYLTLKGGQP.

The DPCK domain occupies 10–207; it reads ILGLTGGIGS…FYLTLKGGQP (198 aa). 18–23 contributes to the ATP binding site; that stretch reads GSGKSA.

This sequence belongs to the CoaE family.

It localises to the cytoplasm. It carries out the reaction 3'-dephospho-CoA + ATP = ADP + CoA + H(+). The protein operates within cofactor biosynthesis; coenzyme A biosynthesis; CoA from (R)-pantothenate: step 5/5. Functionally, catalyzes the phosphorylation of the 3'-hydroxyl group of dephosphocoenzyme A to form coenzyme A. In Pseudomonas putida (strain ATCC 47054 / DSM 6125 / CFBP 8728 / NCIMB 11950 / KT2440), this protein is Dephospho-CoA kinase.